We begin with the raw amino-acid sequence, 945 residues long: Microtubule cross-linking factor 3 (945 aa).

Composition is skewed to low complexity over residues 1–23 (MSQPPSGGAAPAATSASAAAAAT), 72–93 (QQQLQQQQQQGNKITGRSTSGT), and 110–126 (PKGAVPGAVQPAPGAEG). A signal peptide spans 1–25 (MSQPPSGGAAPAATSASAAAAATEA). 4 disordered regions span residues 1-250 (MSQP…SYWK), 265-293 (KERAAAAAAAAQMHTKNGGGGSRSSPVAG), 307-366 (SPMA…TLKN), and 494-522 (LSLKRRGSKDLPKSEKKAQQTPTEDDNED). Residues 141-151 (GQPEEAPREIE) are compositionally biased toward basic and acidic residues. Gly residues predominate over residues 164-179 (GGVGGGGEGGGAGGGP). Residues 219 to 235 (TAATSKTPGPGSRNSGS) are compositionally biased toward low complexity. A compositionally biased stretch (gly residues) spans 236–247 (GSTGSGSGGGGS). Residues 328–345 (AMQAAAPPSSQPHSQQLQ) are compositionally biased toward low complexity. Positions 340-724 (HSQQLQEQED…GKVMQLQYEN (385 aa)) form a coiled coil. Basic and acidic residues-rich tracts occupy residues 353–366 (EMEKLREENETLKN) and 494–511 (LSLKRRGSKDLPKSEKKA). Phosphoserine is present on Ser567. Residues 741-811 (GIRGSPRDSD…PWPKSFSDRQ (71 aa)) are disordered. A compositionally biased stretch (basic and acidic residues) spans 745–766 (SPRDSDAESDAGKKESDDDSRP). Ser779 bears the Phosphoserine mark. A coiled-coil region spans residues 809–833 (DRQQMKDIRSEAERLGKTIDRLIAD). A helical membrane pass occupies residues 913–933 (PIILLILILVLFSSLSYTTIF).

The protein belongs to the MTCL family.

It is found in the membrane. This is Microtubule cross-linking factor 3 (Mtcl3) from Mus musculus (Mouse).